Consider the following 347-residue polypeptide: MATAISVGVAVPAASRRREDGAGPPLLLRRRCLVEGQVRCRLPWLRPIRHNVRVQTSNVNVGAGSYEGGEAGSHGEHLDSSATRDSNKPTKPPSGSRYPQSIAAVLLLCALASAFIVFFKGQPSAVVAMLAKSGFTAAFTLIFVSEIGDKTFFIAALLAMQYQRALVLLGSMAALSLMTIVSVIIGRIFQSVPAQFQTTLPIGEYAAIALLAFFGFKSIKDAWQLPDNANGNLQGNSESGELAEAEELVKEKVAKKLTSPLEVLWKSFSLVFFAEWGDRSMLATIALGAAQSPFGVASGAIAGHLVATFLAIVGGAFLANYLSEKLVGLIGGVLFLLFAVATFFGVF.

The transit peptide at 1-12 directs the protein to the chloroplast; it reads MATAISVGVAVP. A disordered region spans residues 70 to 97; that stretch reads EAGSHGEHLDSSATRDSNKPTKPPSGSR. A run of 7 helical transmembrane segments spans residues 99–119, 124–144, 165–185, 196–216, 257–277, 299–319, and 327–347; these read PQSI…IVFF, SAVV…LIFV, ALVL…SVII, FQTT…FFGF, LTSP…AEWG, GAIA…AFLA, and VGLI…FGVF.

The protein belongs to the GDT1 family.

Its subcellular location is the plastid. The protein resides in the chloroplast membrane. This Oryza sativa subsp. japonica (Rice) protein is GDT1-like protein 2, chloroplastic.